We begin with the raw amino-acid sequence, 288 residues long: Energy-coupling factor transporter ATP-binding protein EcfA2 (288 aa).

The ABC transporter domain maps to 3–246 (IKLEQLGYCY…PDELVDLGLS (244 aa)). 40-47 (GHTGSGKS) provides a ligand contact to ATP.

This sequence belongs to the ABC transporter superfamily. Energy-coupling factor EcfA family. Forms a stable energy-coupling factor (ECF) transporter complex composed of 2 membrane-embedded substrate-binding proteins (S component), 2 ATP-binding proteins (A component) and 2 transmembrane proteins (T component).

The protein localises to the cell membrane. Its function is as follows. ATP-binding (A) component of a common energy-coupling factor (ECF) ABC-transporter complex. Unlike classic ABC transporters this ECF transporter provides the energy necessary to transport a number of different substrates. The chain is Energy-coupling factor transporter ATP-binding protein EcfA2 from Listeria monocytogenes serovar 1/2a (strain ATCC BAA-679 / EGD-e).